A 205-amino-acid polypeptide reads, in one-letter code: MVPLIDIAVESPRWTEAGNEGEDPLSLDALVEAAIGAAVARAGIALHAEAEVSLLFCDDAFIRGLNHQWRGLDKPTNVLSFPSDEDLEDARLLGDIIIAFETSAGEAKAEAKSLAAHVSHLVVHGFLHLIGYDHEEAEEAEEMERMEQVILADLGIADPYHGTAPVAPGGEAQVPNEALETSGKRQDHSLGEILPGGMSRRLAGS.

H124, H128, and H134 together coordinate Zn(2+). The tract at residues 162–205 (GTAPVAPGGEAQVPNEALETSGKRQDHSLGEILPGGMSRRLAGS) is disordered.

Belongs to the endoribonuclease YbeY family. Requires Zn(2+) as cofactor.

The protein localises to the cytoplasm. Functionally, single strand-specific metallo-endoribonuclease involved in late-stage 70S ribosome quality control and in maturation of the 3' terminus of the 16S rRNA. The chain is Endoribonuclease YbeY from Beijerinckia indica subsp. indica (strain ATCC 9039 / DSM 1715 / NCIMB 8712).